The sequence spans 535 residues: Cytochrome P450 4c3 (535 aa).

E342 and C481 together coordinate heme.

This sequence belongs to the cytochrome P450 family. It depends on heme as a cofactor.

Its subcellular location is the endoplasmic reticulum membrane. It is found in the microsome membrane. May be involved in the metabolism of insect hormones and in the breakdown of synthetic insecticides. The protein is Cytochrome P450 4c3 (Cyp4c3) of Drosophila melanogaster (Fruit fly).